The sequence spans 250 residues: Enoyl-[acyl-carrier-protein] reductase [NADPH] FabL (250 aa).

NADP(+) contacts are provided by residues 13–16 (SRGV), 36–38 (ARS), 62–63 (NV), and Asn-89. Residues Tyr-151 and Lys-158 each act as proton acceptor in the active site. NADP(+) contacts are provided by residues Lys-158 and 187 to 189 (IDT).

This sequence belongs to the short-chain dehydrogenases/reductases (SDR) family. Homotetramer.

The enzyme catalyses a 2,3-saturated acyl-[ACP] + NADP(+) = a (2E)-enoyl-[ACP] + NADPH + H(+). It carries out the reaction (2E)-butenoyl-[ACP] + NADPH + H(+) = butanoyl-[ACP] + NADP(+). The protein operates within lipid metabolism; fatty acid biosynthesis. Its activity is regulated as follows. Inhibited by triclosan. Functionally, catalyzes the reduction of a carbon-carbon double bond in an enoyl moiety that is covalently linked to an acyl carrier protein (ACP). It confers resistance to triclosan. The protein is Enoyl-[acyl-carrier-protein] reductase [NADPH] FabL (fabL) of Bacillus subtilis (strain 168).